Consider the following 327-residue polypeptide: Glycerol-3-phosphate dehydrogenase [NAD(P)+] (327 aa).

NADPH is bound by residues Trp-11, Arg-30, and Lys-103. Positions 103, 131, and 133 each coordinate sn-glycerol 3-phosphate. Position 135 (Ala-135) interacts with NADPH. Sn-glycerol 3-phosphate contacts are provided by Lys-186, Asp-243, Ser-253, Arg-254, and Asn-255. The Proton acceptor role is filled by Lys-186. Residue Arg-254 coordinates NADPH. NADPH contacts are provided by Val-281 and Glu-283.

The protein belongs to the NAD-dependent glycerol-3-phosphate dehydrogenase family.

It localises to the cytoplasm. It catalyses the reaction sn-glycerol 3-phosphate + NAD(+) = dihydroxyacetone phosphate + NADH + H(+). The catalysed reaction is sn-glycerol 3-phosphate + NADP(+) = dihydroxyacetone phosphate + NADPH + H(+). It functions in the pathway membrane lipid metabolism; glycerophospholipid metabolism. Its function is as follows. Catalyzes the reduction of the glycolytic intermediate dihydroxyacetone phosphate (DHAP) to sn-glycerol 3-phosphate (G3P), the key precursor for phospholipid synthesis. This chain is Glycerol-3-phosphate dehydrogenase [NAD(P)+], found in Wolbachia sp. subsp. Drosophila simulans (strain wRi).